A 460-amino-acid polypeptide reads, in one-letter code: UDP-N-acetylmuramate--L-alanine ligase (460 aa).

118–124 (GAHGKTT) contributes to the ATP binding site.

The protein belongs to the MurCDEF family.

The protein localises to the cytoplasm. It catalyses the reaction UDP-N-acetyl-alpha-D-muramate + L-alanine + ATP = UDP-N-acetyl-alpha-D-muramoyl-L-alanine + ADP + phosphate + H(+). The protein operates within cell wall biogenesis; peptidoglycan biosynthesis. In terms of biological role, cell wall formation. The protein is UDP-N-acetylmuramate--L-alanine ligase of Clostridium botulinum (strain Alaska E43 / Type E3).